A 429-amino-acid polypeptide reads, in one-letter code: Ribosomal RNA small subunit methyltransferase B (429 aa).

Residues 254-260, aspartate 277, aspartate 303, and aspartate 322 each bind S-adenosyl-L-methionine; that span reads CAAPGGK. Cysteine 375 acts as the Nucleophile in catalysis.

The protein belongs to the class I-like SAM-binding methyltransferase superfamily. RsmB/NOP family.

It is found in the cytoplasm. It catalyses the reaction cytidine(967) in 16S rRNA + S-adenosyl-L-methionine = 5-methylcytidine(967) in 16S rRNA + S-adenosyl-L-homocysteine + H(+). Functionally, specifically methylates the cytosine at position 967 (m5C967) of 16S rRNA. In Yersinia pestis bv. Antiqua (strain Angola), this protein is Ribosomal RNA small subunit methyltransferase B.